The sequence spans 483 residues: Trehalose-6-phosphate synthase (483 aa).

Arg22 contributes to the D-glucose 6-phosphate binding site. Residue 42-43 (GG) participates in UDP-alpha-D-glucose binding. D-glucose 6-phosphate contacts are provided by Tyr94 and Asp148. 2 residues coordinate UDP-alpha-D-glucose: Arg290 and Lys295. Residue Arg328 participates in D-glucose 6-phosphate binding. 393–397 (LVAKE) contributes to the UDP-alpha-D-glucose binding site.

Belongs to the glycosyltransferase 20 family. In terms of assembly, homotetramer.

It catalyses the reaction ADP-alpha-D-glucose + D-glucose 6-phosphate = alpha,alpha-trehalose 6-phosphate + ADP + H(+). It carries out the reaction CDP-alpha-D-glucose + D-glucose 6-phosphate = alpha,alpha-trehalose 6-phosphate + CDP + H(+). The enzyme catalyses GDP-alpha-D-glucose + D-glucose 6-phosphate = alpha,alpha-trehalose 6-phosphate + GDP + H(+). The catalysed reaction is TDP-alpha-D-glucose + D-glucose 6-phosphate = 5-methyl-UDP + alpha,alpha-trehalose 6-phosphate + H(+). It catalyses the reaction D-glucose 6-phosphate + UDP-alpha-D-glucose = alpha,alpha-trehalose 6-phosphate + UDP + H(+). The protein operates within glycan biosynthesis; trehalose biosynthesis. In terms of biological role, probably involved in the osmoprotection via the biosynthesis of trehalose and in the production of glycogen and alpha-glucan via the TreS-Pep2 branch involved in the biosynthesis of maltose-1-phosphate (M1P). Catalyzes the transfer of glucose from UDP-glucose (UDP-Glc) to D-glucose 6-phosphate (Glc-6-P) to form trehalose-6-phosphate. Probably also able to use ADP-Glc, CDP-Glc, GDP-Glc and TDP-Glc as glucosyl donors. The polypeptide is Trehalose-6-phosphate synthase (Mycobacterium sp. (strain JLS)).